We begin with the raw amino-acid sequence, 557 residues long: Formate--tetrahydrofolate ligase 2 (557 aa).

An ATP-binding site is contributed by 66-73; it reads TPAGEGKT.

The protein belongs to the formate--tetrahydrofolate ligase family.

It catalyses the reaction (6S)-5,6,7,8-tetrahydrofolate + formate + ATP = (6R)-10-formyltetrahydrofolate + ADP + phosphate. It participates in one-carbon metabolism; tetrahydrofolate interconversion. The polypeptide is Formate--tetrahydrofolate ligase 2 (Streptococcus pyogenes serotype M18 (strain MGAS8232)).